The sequence spans 147 residues: MRDESRLDKYVIKEILRINRHLPRRRKTLEELLREERPHVVNRDGTKHYFDRDELERLADILPRYLHGRLKLPILIELGYSGAAVIRGKAEVRVVCEVLGEEWRFSQDRVELNMLDVRKLRREFPTATQYMFSTEYIMGRPKVERRG.

It belongs to the UPF0216 family.

The sequence is that of UPF0216 protein MK1676 from Methanopyrus kandleri (strain AV19 / DSM 6324 / JCM 9639 / NBRC 100938).